The primary structure comprises 447 residues: Na(+)-translocating NADH-quinone reductase subunit A (447 aa).

Belongs to the NqrA family. Composed of six subunits; NqrA, NqrB, NqrC, NqrD, NqrE and NqrF.

The enzyme catalyses a ubiquinone + n Na(+)(in) + NADH + H(+) = a ubiquinol + n Na(+)(out) + NAD(+). NQR complex catalyzes the reduction of ubiquinone-1 to ubiquinol by two successive reactions, coupled with the transport of Na(+) ions from the cytoplasm to the periplasm. NqrA to NqrE are probably involved in the second step, the conversion of ubisemiquinone to ubiquinol. The polypeptide is Na(+)-translocating NADH-quinone reductase subunit A (Neisseria meningitidis serogroup B (strain ATCC BAA-335 / MC58)).